Reading from the N-terminus, the 494-residue chain is Amidophosphoribosyltransferase (494 aa).

Residues 1–10 (MSNYSGLNEE) constitute a propeptide that is removed on maturation. Residue C11 is the Nucleophile of the active site. The Glutamine amidotransferase type-2 domain maps to 11–231 (CGVFGIWNHP…AGEYVVITDE (221 aa)). Mg(2+) contacts are provided by S294, D356, and D357.

This sequence in the C-terminal section; belongs to the purine/pyrimidine phosphoribosyltransferase family. Requires Mg(2+) as cofactor.

The catalysed reaction is 5-phospho-beta-D-ribosylamine + L-glutamate + diphosphate = 5-phospho-alpha-D-ribose 1-diphosphate + L-glutamine + H2O. The protein operates within purine metabolism; IMP biosynthesis via de novo pathway; N(1)-(5-phospho-D-ribosyl)glycinamide from 5-phospho-alpha-D-ribose 1-diphosphate: step 1/2. Its function is as follows. Catalyzes the formation of phosphoribosylamine from phosphoribosylpyrophosphate (PRPP) and glutamine. This Staphylococcus epidermidis (strain ATCC 35984 / DSM 28319 / BCRC 17069 / CCUG 31568 / BM 3577 / RP62A) protein is Amidophosphoribosyltransferase.